We begin with the raw amino-acid sequence, 549 residues long: Probable protein kinase UbiB (549 aa).

The 379-residue stretch at Asn-123 to Leu-501 folds into the Protein kinase domain. Residues Leu-129–Val-137 and Lys-152 each bind ATP. Asp-287 (proton acceptor) is an active-site residue. The next 2 membrane-spanning stretches (helical) occupy residues Ser-498–Gln-518 and Ala-520–Trp-540.

The protein belongs to the ABC1 family. UbiB subfamily.

It localises to the cell inner membrane. It participates in cofactor biosynthesis; ubiquinone biosynthesis [regulation]. In terms of biological role, is probably a protein kinase regulator of UbiI activity which is involved in aerobic coenzyme Q (ubiquinone) biosynthesis. This chain is Probable protein kinase UbiB, found in Shewanella loihica (strain ATCC BAA-1088 / PV-4).